Here is a 165-residue protein sequence, read N- to C-terminus: Putative protein FAM86C2P (165 aa).

It belongs to the class I-like SAM-binding methyltransferase superfamily. EEF2KMT family.

This Homo sapiens (Human) protein is Putative protein FAM86C2P (FAM86C2P).